The sequence spans 161 residues: Transcription elongation factor GreA (161 aa).

Positions 46 to 71 (AEYTAAKEKQSFLHGKLQELENNLAL) form a coiled coil.

The protein belongs to the GreA/GreB family.

Necessary for efficient RNA polymerase transcription elongation past template-encoded arresting sites. The arresting sites in DNA have the property of trapping a certain fraction of elongating RNA polymerases that pass through, resulting in locked ternary complexes. Cleavage of the nascent transcript by cleavage factors such as GreA or GreB allows the resumption of elongation from the new 3'terminus. GreA releases sequences of 2 to 3 nucleotides. This is Transcription elongation factor GreA from Syntrophus aciditrophicus (strain SB).